Consider the following 642-residue polypeptide: DNA gyrase subunit B (642 aa).

The Toprim domain maps to 422 to 536; it reads CELFIVEGDS…AGYVYIAQPP (115 aa). Residues Glu428, Asp501, and Asp503 each coordinate Mg(2+).

It belongs to the type II topoisomerase family. As to quaternary structure, heterotetramer, composed of two GyrA and two GyrB chains. Within the heterotetramer, GyrA contains the active site tyrosine that forms a covalent intermediate with the DNA, while GyrB contributes the cofactor binding sites and catalyzes ATP hydrolysis. It depends on Mg(2+) as a cofactor. Mn(2+) is required as a cofactor. Ca(2+) serves as cofactor.

The protein resides in the cytoplasm. It catalyses the reaction ATP-dependent breakage, passage and rejoining of double-stranded DNA.. Pyrrolopyrimidines inhibit both GyrB and its paralog in topoisomerase IV (parE). Functionally, DNA gyrase negatively supercoils closed circular double-stranded DNA in an ATP-dependent manner and also catalyzes the interconversion of other topological isomers of double-stranded DNA rings, including catenanes and knotted rings. The protein is DNA gyrase subunit B of Enterococcus faecalis (strain ATCC 700802 / V583).